The chain runs to 591 residues: V-type ATP synthase alpha chain (591 aa).

An ATP-binding site is contributed by 242–249 (GPFGAGKT).

The protein belongs to the ATPase alpha/beta chains family.

It carries out the reaction ATP + H2O + 4 H(+)(in) = ADP + phosphate + 5 H(+)(out). In terms of biological role, produces ATP from ADP in the presence of a proton gradient across the membrane. The V-type alpha chain is a catalytic subunit. The chain is V-type ATP synthase alpha chain from Chlamydia trachomatis serovar A (strain ATCC VR-571B / DSM 19440 / HAR-13).